Reading from the N-terminus, the 78-residue chain is Acyl carrier protein (78 aa).

Residues 2 to 77 (DNIVERVKKI…QAVDYILAGK (76 aa)) form the Carrier domain. Ser37 is subject to O-(pantetheine 4'-phosphoryl)serine.

The protein belongs to the acyl carrier protein (ACP) family. In terms of processing, 4'-phosphopantetheine is transferred from CoA to a specific serine of apo-ACP by AcpS. This modification is essential for activity because fatty acids are bound in thioester linkage to the sulfhydryl of the prosthetic group.

It localises to the cytoplasm. The protein operates within lipid metabolism; fatty acid biosynthesis. Functionally, carrier of the growing fatty acid chain in fatty acid biosynthesis. The chain is Acyl carrier protein from Dechloromonas aromatica (strain RCB).